An 88-amino-acid polypeptide reads, in one-letter code: Translation initiation factor IF-1 1 (88 aa).

Residues 1–72 (MAKEELIELD…TKGRINFRHK (72 aa)) enclose the S1-like domain.

It belongs to the IF-1 family. As to quaternary structure, component of the 30S ribosomal translation pre-initiation complex which assembles on the 30S ribosome in the order IF-2 and IF-3, IF-1 and N-formylmethionyl-tRNA(fMet); mRNA recruitment can occur at any time during PIC assembly.

It is found in the cytoplasm. In terms of biological role, one of the essential components for the initiation of protein synthesis. Stabilizes the binding of IF-2 and IF-3 on the 30S subunit to which N-formylmethionyl-tRNA(fMet) subsequently binds. Helps modulate mRNA selection, yielding the 30S pre-initiation complex (PIC). Upon addition of the 50S ribosomal subunit IF-1, IF-2 and IF-3 are released leaving the mature 70S translation initiation complex. The protein is Translation initiation factor IF-1 1 of Burkholderia mallei (strain ATCC 23344).